A 121-amino-acid polypeptide reads, in one-letter code: Large ribosomal subunit protein bL12 (121 aa).

It belongs to the bacterial ribosomal protein bL12 family. In terms of assembly, homodimer. Part of the ribosomal stalk of the 50S ribosomal subunit. Forms a multimeric L10(L12)X complex, where L10 forms an elongated spine to which 2 to 4 L12 dimers bind in a sequential fashion. Binds GTP-bound translation factors.

Forms part of the ribosomal stalk which helps the ribosome interact with GTP-bound translation factors. Is thus essential for accurate translation. This is Large ribosomal subunit protein bL12 from Klebsiella pneumoniae (strain 342).